The primary structure comprises 89 residues: Acylphosphatase (89 aa).

An Acylphosphatase-like domain is found at 3–89; the sequence is RFTARVAGLV…QSDLTDFRRK (87 aa). Catalysis depends on residues Arg18 and Asn36.

Belongs to the acylphosphatase family.

The catalysed reaction is an acyl phosphate + H2O = a carboxylate + phosphate + H(+). This Frankia casuarinae (strain DSM 45818 / CECT 9043 / HFP020203 / CcI3) protein is Acylphosphatase (acyP).